The sequence spans 479 residues: Polyadenylate-binding protein-interacting protein 1 (479 aa).

Residues 1–114 form a disordered region; it reads MSDGFDRAPG…PQQNSESAMA (114 aa). Residue Ser2 is modified to N-acetylalanine. Residues 11-33 are compositionally biased toward gly residues; that stretch reads AGRGRSRGLGRGGGGPEGGGFPN. Omega-N-methylarginine is present on Arg21. Positions 45 to 69 are enriched in pro residues; sequence PPQPKAPGFLQPPPLRQPRTTPPPG. Positions 98–111 are enriched in polar residues; it reads PSSQDKIPQQNSES. The interval 116-143 is PABPC1-interacting motif-2 (PAM2); that stretch reads PQVVVAPVLMSKLSVNAPEFYPSGYSSS. Residues 157 to 375 form a PAIP1 middle domain (PAIP1M) region; the sequence is TLSEYVQDFL…LLKLVELRSS (219 aa). An MIF4G domain is found at 159 to 376; sequence SEYVQDFLNH…LKLVELRSSN (218 aa). The tract at residues 435–455 is disordered; it reads DYEENGTDLSGAGDPYLDDID. A PABPC1-interacting motif-1 (PAM1) region spans residues 440-479; the sequence is GTDLSGAGDPYLDDIDDEMDPEIEEAYEKFCLESERKRKQ.

In terms of assembly, interacts with the RRM1-RRM2 and C-terminus regions of PABPC1 in a 1:1 stoichiometry. Interacts with EIF4A. (Microbial infection) Interacts (via PAIP1M) with human SARS coronaviruses SARS-COV and SARS-COV-2 NSP3 protein (via SARS-unique domain); the interaction increases binding affinity with PABPC1.

The protein resides in the cytoplasm. Its function is as follows. Acts as a coactivator in the regulation of translation initiation of poly(A)-containing mRNAs. Its stimulatory activity on translation is mediated via its action on PABPC1. Competes with PAIP2 for binding to PABPC1. Its association with EIF4A and PABPC1 may potentiate contacts between mRNA termini. May also be involved in translationally coupled mRNA turnover. Implicated with other RNA-binding proteins in the cytoplasmic deadenylation/translational and decay interplay of the FOS mRNA mediated by the major coding-region determinant of instability (mCRD) domain. Functionally, (Microbial infection) Upon interaction with SARS coronavirus SARS-CoV NSP3 protein, plays an important role in viral protein synthesis. This is Polyadenylate-binding protein-interacting protein 1 from Homo sapiens (Human).